The chain runs to 549 residues: Fumarate hydratase 1, mitochondrial (549 aa).

Cys-114 contributes to the [4Fe-4S] cluster binding site. (S)-malate-binding positions include 115 to 116 (QD), Arg-154, Gly-197, and 200 to 206 (NKSFLLQ). [4Fe-4S] cluster contacts are provided by Cys-233 and Cys-328. Residues Arg-404, 450-454 (TTAGR), and Lys-474 each bind (S)-malate.

Belongs to the class-I fumarase family. As to quaternary structure, homodimer. [4Fe-4S] cluster serves as cofactor.

The protein localises to the mitochondrion. The enzyme catalyses (S)-malate = fumarate + H2O. The protein operates within carbohydrate metabolism; tricarboxylic acid cycle; (S)-malate from fumarate: step 1/1. Its activity is regulated as follows. Specifically and competitively inhibited by 2-thiomalate, which coordinates with the catalytic [4Fe-4S] cluster. Its function is as follows. Catalyzes the reversible hydration of fumarate to (S)-malate. Catalyzes the hydration of fumarate to L-malate in the tricarboxylic acid (TCA) cycle to facilitate a transition step in the production of energy in the form of NADH. The protein is Fumarate hydratase 1, mitochondrial of Leishmania major.